We begin with the raw amino-acid sequence, 126 residues long: Large ribosomal subunit protein bL12 (126 aa).

The protein belongs to the bacterial ribosomal protein bL12 family. In terms of assembly, homodimer. Part of the ribosomal stalk of the 50S ribosomal subunit. Forms a multimeric L10(L12)X complex, where L10 forms an elongated spine to which 2 to 4 L12 dimers bind in a sequential fashion. Binds GTP-bound translation factors.

In terms of biological role, forms part of the ribosomal stalk which helps the ribosome interact with GTP-bound translation factors. Is thus essential for accurate translation. This is Large ribosomal subunit protein bL12 from Helicobacter hepaticus (strain ATCC 51449 / 3B1).